Here is an 880-residue protein sequence, read N- to C-terminus: EP-cadherin (880 aa).

The N-terminal stretch at 1 to 28 (MGSTRLRNASVWLCGLLCLLQVVPSINA) is a signal peptide. Residues 29–155 (DVSGCKPGFS…THTGLKRKKR (127 aa)) constitute a propeptide that is removed on maturation. N-linked (GlcNAc...) asparagine glycosylation occurs at N61. 5 consecutive Cadherin domains span residues 156 to 263 (DWVI…RPKF), 264 to 376 (TQDV…APIF), 377 to 487 (DPKT…APFF), 488 to 593 (VPAV…DNGP), and 594 to 704 (VPSP…GFDL). Topologically, residues 156 to 703 (DWVIPPIKVS…CQEKLVGGFD (548 aa)) are extracellular. Residues T343, T382, and T400 are each glycosylated (O-linked (GalNAc...) threonine). A glycan (N-linked (GlcNAc...) asparagine) is linked at N425. 5 O-linked (GalNAc...) threonine glycosylation sites follow: T428, T469, T471, T473, and T475. N-linked (GlcNAc...) asparagine glycosylation occurs at N558. T562, T576, T578, and T580 each carry an O-linked (GalNAc...) threonine glycan. Cystine bridges form between C603-C687 and C685-C694. The N-linked (GlcNAc...) asparagine glycan is linked to N681. Residues 704–728 (LPIILVILGSVLALLILFLLLLLFL) form a helical membrane-spanning segment. Topologically, residues 729-880 (KRKKVVKEPL…DMYGGDDDEE (152 aa)) are cytoplasmic. The interval 790 to 826 (PAPHYRPRPSNPDEIGNFIDENLDAADNDPTAPPYDS) is disordered.

In terms of assembly, interacts with CTNNB1.

It localises to the cell membrane. Its function is as follows. Cadherins are calcium-dependent cell adhesion proteins. They preferentially interact with themselves in a homophilic manner in connecting cells; cadherins may thus contribute to the sorting of heterogeneous cell types. This chain is EP-cadherin, found in Xenopus laevis (African clawed frog).